The sequence spans 206 residues: Superoxide dismutase [Mn] (206 aa).

Residues H30, H78, D166, and H170 each contribute to the Mn(2+) site.

The protein belongs to the iron/manganese superoxide dismutase family. As to quaternary structure, homodimer. Mn(2+) is required as a cofactor.

It catalyses the reaction 2 superoxide + 2 H(+) = H2O2 + O2. Its function is as follows. Destroys superoxide anion radicals which are normally produced within the cells and which are toxic to biological systems. This Chlamydia trachomatis serovar D (strain ATCC VR-885 / DSM 19411 / UW-3/Cx) protein is Superoxide dismutase [Mn] (sodA).